Consider the following 106-residue polypeptide: Large ribosomal subunit protein eL42 (106 aa).

The protein belongs to the eukaryotic ribosomal protein eL42 family.

The polypeptide is Large ribosomal subunit protein eL42 (RPL44) (Kluyveromyces marxianus (Yeast)).